Here is a 426-residue protein sequence, read N- to C-terminus: Serine--tRNA ligase (426 aa).

231-233 serves as a coordination point for L-serine; the sequence is TAE. 262–264 contributes to the ATP binding site; the sequence is RAE. Residue Glu285 coordinates L-serine. Residue 349–352 participates in ATP binding; it reads EISS. L-serine is bound at residue Ser385.

Belongs to the class-II aminoacyl-tRNA synthetase family. Type-1 seryl-tRNA synthetase subfamily. As to quaternary structure, homodimer. The tRNA molecule binds across the dimer.

Its subcellular location is the cytoplasm. The enzyme catalyses tRNA(Ser) + L-serine + ATP = L-seryl-tRNA(Ser) + AMP + diphosphate + H(+). It catalyses the reaction tRNA(Sec) + L-serine + ATP = L-seryl-tRNA(Sec) + AMP + diphosphate + H(+). It functions in the pathway aminoacyl-tRNA biosynthesis; selenocysteinyl-tRNA(Sec) biosynthesis; L-seryl-tRNA(Sec) from L-serine and tRNA(Sec): step 1/1. In terms of biological role, catalyzes the attachment of serine to tRNA(Ser). Is also able to aminoacylate tRNA(Sec) with serine, to form the misacylated tRNA L-seryl-tRNA(Sec), which will be further converted into selenocysteinyl-tRNA(Sec). In Myxococcus xanthus (strain DK1622), this protein is Serine--tRNA ligase.